Reading from the N-terminus, the 312-residue chain is Olfactory receptor-like protein COR6 (312 aa).

The Extracellular portion of the chain corresponds to 1–26 (MASGNCTTPTTFILSGLTDNPGLQMP). The N-linked (GlcNAc...) asparagine glycan is linked to asparagine 5. Residues 27–49 (LFMVFLAIYTITLLTNLGLIALI) traverse the membrane as a helical segment. Over 50–57 (SIDLQLQT) the chain is Cytoplasmic. A helical transmembrane segment spans residues 58–79 (PMYIFLQNLSFTDAVYSTVITP). The Extracellular portion of the chain corresponds to 80-100 (KMLATFLEETKTISYVGCILQ). Cysteine 97 and cysteine 179 form a disulfide bridge. Residues 101–120 (YFSFVLLTVRECLLLAVMAY) form a helical membrane-spanning segment. Residues 121–139 (DRYAAICKPLLYPAIMTKA) are Cytoplasmic-facing. Residues 140–164 (VCWRLVKGLYSLAFLNFLVHTSGLL) form a helical membrane-spanning segment. At 165–205 (KLSFCSSNVVNHFFCDNSPLFQISSSSTALNELLVFIFGSL) the chain is on the extracellular side. The helical transmembrane segment at 206-226 (FVMSSIITILISYVFIILTVV) threads the bilayer. Topologically, residues 227–239 (RIRSKERKYKAFS) are cytoplasmic. A helical transmembrane segment spans residues 240–260 (TCTSHLMAVSLFHGTIVFMYF). Residues 261 to 271 (QPANNFSLDKD) are Extracellular-facing. A helical membrane pass occupies residues 272 to 292 (KIMSLFYTVVIPMLNPLIYSW). The Cytoplasmic portion of the chain corresponds to 293–312 (RNKEVKDALHRAIATAVLFH).

This sequence belongs to the G-protein coupled receptor 1 family.

It localises to the cell membrane. Odorant receptor. The chain is Olfactory receptor-like protein COR6 (COR6) from Gallus gallus (Chicken).